We begin with the raw amino-acid sequence, 452 residues long: Chromosomal replication initiator protein DnaA (452 aa).

Residues 1-84 (MTENEQIFWN…SIEYVFEETQ (84 aa)) are domain I, interacts with DnaA modulators. Residues 84 to 110 (QSTSNSPQISQNKTAELATETLPFVQN) are domain II. The segment at 111-329 (DLNPKYSFDN…GALKDISLVA (219 aa)) is domain III, AAA+ region. 4 residues coordinate ATP: Gly-155, Gly-157, Lys-158, and Thr-159. The segment at 330-452 (NFKKLDVITV…EMETIKNKIK (123 aa)) is domain IV, binds dsDNA.

It belongs to the DnaA family. Oligomerizes as a right-handed, spiral filament on DNA at oriC.

The protein resides in the cytoplasm. Functionally, plays an essential role in the initiation and regulation of chromosomal replication. ATP-DnaA binds to the origin of replication (oriC) to initiate formation of the DNA replication initiation complex once per cell cycle. Binds the DnaA box (a 9 base pair repeat at the origin) and separates the double-stranded (ds)DNA. Forms a right-handed helical filament on oriC DNA; dsDNA binds to the exterior of the filament while single-stranded (ss)DNA is stabiized in the filament's interior. The ATP-DnaA-oriC complex binds and stabilizes one strand of the AT-rich DNA unwinding element (DUE), permitting loading of DNA polymerase. After initiation quickly degrades to an ADP-DnaA complex that is not apt for DNA replication. Binds acidic phospholipids. The protein is Chromosomal replication initiator protein DnaA of Streptococcus mutans serotype c (strain ATCC 700610 / UA159).